Consider the following 434-residue polypeptide: Elongation factor 1-alpha (434 aa).

Positions 5–232 (KPHINLVVIG…DNVHPPKRPV (228 aa)) constitute a tr-type G domain. The G1 stretch occupies residues 14–21 (GHVVAGKS). Residue 14–21 (GHVVAGKS) participates in GTP binding. The interval 70-74 (GITID) is G2. A G3 region spans residues 91 to 94 (DAPG). Residues 91–95 (DAPGH) and 153–156 (NKMD) each bind GTP. The segment at 153–156 (NKMD) is G4. Residues 196–198 (SGF) are G5.

The protein belongs to the TRAFAC class translation factor GTPase superfamily. Classic translation factor GTPase family. EF-Tu/EF-1A subfamily.

The protein resides in the cytoplasm. In terms of biological role, this protein promotes the GTP-dependent binding of aminoacyl-tRNA to the A-site of ribosomes during protein biosynthesis. The chain is Elongation factor 1-alpha from Blastocystis hominis.